Here is a 667-residue protein sequence, read N- to C-terminus: Bifunctional polymyxin resistance protein ArnA (667 aa).

Residues 1 to 304 (MKAIVFAYHD…EMGIVTDVRL (304 aa)) are formyltransferase ArnAFT. Catalysis depends on His104, which acts as the Proton donor; for formyltransferase activity. Residues Arg114 and 136–140 (VKKAD) each bind (6R)-10-formyltetrahydrofolate. The tract at residues 314-667 (RRTRVLILGV…TAAPKDELNA (354 aa)) is dehydrogenase ArnADH. NAD(+) contacts are provided by residues Asp347 and 368 to 369 (DI). Residues Ala393, Tyr398, and 432–433 (TS) each bind UDP-alpha-D-glucuronate. The active-site Proton acceptor; for decarboxylase activity is Glu434. Residues Arg460, Asn492, 526–535 (KLVDGGAQKR), and Tyr613 each bind UDP-alpha-D-glucuronate. Arg619 acts as the Proton donor; for decarboxylase activity in catalysis.

The protein in the N-terminal section; belongs to the Fmt family. UDP-L-Ara4N formyltransferase subfamily. This sequence in the C-terminal section; belongs to the NAD(P)-dependent epimerase/dehydratase family. UDP-glucuronic acid decarboxylase subfamily. As to quaternary structure, homohexamer, formed by a dimer of trimers.

It carries out the reaction UDP-alpha-D-glucuronate + NAD(+) = UDP-beta-L-threo-pentopyranos-4-ulose + CO2 + NADH. The enzyme catalyses UDP-4-amino-4-deoxy-beta-L-arabinose + (6R)-10-formyltetrahydrofolate = UDP-4-deoxy-4-formamido-beta-L-arabinose + (6S)-5,6,7,8-tetrahydrofolate + H(+). It functions in the pathway nucleotide-sugar biosynthesis; UDP-4-deoxy-4-formamido-beta-L-arabinose biosynthesis; UDP-4-deoxy-4-formamido-beta-L-arabinose from UDP-alpha-D-glucuronate: step 1/3. It participates in nucleotide-sugar biosynthesis; UDP-4-deoxy-4-formamido-beta-L-arabinose biosynthesis; UDP-4-deoxy-4-formamido-beta-L-arabinose from UDP-alpha-D-glucuronate: step 3/3. The protein operates within bacterial outer membrane biogenesis; lipopolysaccharide biosynthesis. In terms of biological role, bifunctional enzyme that catalyzes the oxidative decarboxylation of UDP-glucuronic acid (UDP-GlcUA) to UDP-4-keto-arabinose (UDP-Ara4O) and the addition of a formyl group to UDP-4-amino-4-deoxy-L-arabinose (UDP-L-Ara4N) to form UDP-L-4-formamido-arabinose (UDP-L-Ara4FN). The modified arabinose is attached to lipid A and is required for resistance to polymyxin and cationic antimicrobial peptides. In Yersinia pestis bv. Antiqua (strain Antiqua), this protein is Bifunctional polymyxin resistance protein ArnA.